The following is a 557-amino-acid chain: 2-isopropylmalate synthase (557 aa).

In terms of domain architecture, Pyruvate carboxyltransferase spans 33 to 307; it reads PLWLSTDLRD…DPGLDFSDID (275 aa). Positions 42, 246, 248, and 282 each coordinate Mg(2+). Positions 439–557 are regulatory domain; sequence AETPYALKGH…LGQQASIRAA (119 aa).

This sequence belongs to the alpha-IPM synthase/homocitrate synthase family. LeuA type 2 subfamily. In terms of assembly, homodimer. The cofactor is Mg(2+).

It is found in the cytoplasm. It carries out the reaction 3-methyl-2-oxobutanoate + acetyl-CoA + H2O = (2S)-2-isopropylmalate + CoA + H(+). The protein operates within amino-acid biosynthesis; L-leucine biosynthesis; L-leucine from 3-methyl-2-oxobutanoate: step 1/4. Its function is as follows. Catalyzes the condensation of the acetyl group of acetyl-CoA with 3-methyl-2-oxobutanoate (2-ketoisovalerate) to form 3-carboxy-3-hydroxy-4-methylpentanoate (2-isopropylmalate). This chain is 2-isopropylmalate synthase, found in Azotobacter vinelandii (strain DJ / ATCC BAA-1303).